A 24-amino-acid polypeptide reads, in one-letter code: Brevinin-1HSa (24 aa).

Cysteines 18 and 24 form a disulfide.

Expressed by the skin glands.

Its subcellular location is the secreted. Functionally, has antibacterial activity against the Gram-positive bacterium S.aureus ATCC 25923 (MIC=3 uM) and the Gram-negative bacterium E.coli ATCC 25726 (MIC=24 uM). This chain is Brevinin-1HSa, found in Odorrana hosii (Hose's rock frog).